We begin with the raw amino-acid sequence, 312 residues long: uncharacterized protein (312 aa).

The protein belongs to the asfivirus CP312R family.

The protein localises to the virion. This is an uncharacterized protein from African swine fever virus (isolate Tick/Malawi/Lil 20-1/1983) (ASFV).